The sequence spans 541 residues: EH domain-containing protein 4 (541 aa).

Met1 carries the post-translational modification N-acetylmethionine. The interval 1-20 is disordered; the sequence is MFSWMGRQAGGRERSGGMDA. Ser15 is modified (phosphoserine). In terms of domain architecture, Dynamin-type G spans 58-289; that stretch reads FENKPMILLV…DLFRDIQSLP (232 aa). The G1 motif stretch occupies residues 68–75; it reads GQYSTGKT. 68–75 lines the ATP pocket; it reads GQYSTGKT. The tract at residues 94–95 is G2 motif; sequence EP. Positions 156–159 are G3 motif; the sequence is DSPG. A Phosphoserine modification is found at Ser162. The G4 motif stretch occupies residues 222 to 225; sequence NKAD. Lys223 is a binding site for ATP. A region of interest (G5 motif) is located at residue Val246. Trp261 serves as a coordination point for ATP. In terms of domain architecture, EH spans 447-535; that stretch reads DKPVYDELFY…PHLVPPSHRK (89 aa). Position 451 is a phosphotyrosine (Tyr451). Ser459 carries the phosphoserine modification. Residues 479–514 form the EF-hand domain; it reads LPNSVLGKIWKLADCDCDGMLDEEEFALAKHLIKIK. Ca(2+) contacts are provided by Asp492, Asp494, Asp496, Met498, and Glu503.

It belongs to the TRAFAC class dynamin-like GTPase superfamily. Dynamin/Fzo/YdjA family. EHD subfamily. Homooligomer, and heterooligomer with EHD1, EHD2 and EHD3. Forms a complex with EHD4 and MICALL1; the complex controls CDH5 trafficking and coordinates angiogenesis.

The protein localises to the early endosome membrane. It is found in the recycling endosome membrane. It localises to the cell membrane. Its subcellular location is the cell junction. The protein resides in the adherens junction. Functionally, ATP- and membrane-binding protein that probably controls membrane reorganization/tubulation upon ATP hydrolysis. Plays a role in early endosomal transport. During sprouting angiogenesis, in complex with PACSIN2 and MICALL1, forms recycling endosome-like tubular structure at asymmetric adherens junctions to control CDH5 trafficking. The polypeptide is EH domain-containing protein 4 (Mus musculus (Mouse)).